Reading from the N-terminus, the 239-residue chain is Ribosomal RNA small subunit methyltransferase G (239 aa).

Residues Gly77, Phe82, 128-129 (AE), and Arg147 each bind S-adenosyl-L-methionine.

This sequence belongs to the methyltransferase superfamily. RNA methyltransferase RsmG family.

The protein localises to the cytoplasm. In terms of biological role, specifically methylates the N7 position of guanine in position 535 of 16S rRNA. This chain is Ribosomal RNA small subunit methyltransferase G, found in Bacillus cereus (strain ZK / E33L).